A 123-amino-acid polypeptide reads, in one-letter code: MPTISQLVRKGREKLLTKKKAPALKESPQKRGVCTRVYTTTPKKPNSALRKVARVRLTNGFEVTSYIPGVGHNLQEHSVVLIRGGRVKDLPGVRYHIVRGTLDAVGVQGRKQGRSKYGAKRPS.

Residue Asp-89 is modified to 3-methylthioaspartic acid.

Belongs to the universal ribosomal protein uS12 family. Part of the 30S ribosomal subunit. Contacts proteins S8 and S17. May interact with IF1 in the 30S initiation complex.

Functionally, with S4 and S5 plays an important role in translational accuracy. Interacts with and stabilizes bases of the 16S rRNA that are involved in tRNA selection in the A site and with the mRNA backbone. Located at the interface of the 30S and 50S subunits, it traverses the body of the 30S subunit contacting proteins on the other side and probably holding the rRNA structure together. The combined cluster of proteins S8, S12 and S17 appears to hold together the shoulder and platform of the 30S subunit. This chain is Small ribosomal subunit protein uS12, found in Anaeromyxobacter sp. (strain Fw109-5).